Reading from the N-terminus, the 25-residue chain is Kappa-conotoxin RIIIJ (25 aa).

Proline 2, proline 3, proline 7, proline 8, proline 13, proline 15, and proline 21 each carry 4-hydroxyproline. Cystine bridges form between cysteine 4-cysteine 17, cysteine 5-cysteine 22, and cysteine 12-cysteine 23.

The protein belongs to the conotoxin M superfamily. As to expression, expressed by the venom duct.

It localises to the secreted. Its function is as follows. Kappa-conotoxins inhibits voltage-gated potassium channels. This toxin dose-dependently and reversibly inhibits the Kv1.2/KCNA2 channel in mammalia. Does not exert protective effect on cardiac tissue when administered after an ischemic event. The polypeptide is Kappa-conotoxin RIIIJ (Conus radiatus (Rayed cone)).